A 219-amino-acid polypeptide reads, in one-letter code: Transcriptional activator protein rep2 (219 aa).

The segment at 177 to 197 is a zinc-finger region; that stretch reads CSKCNTTFNHSTALMMHEATC.

In terms of biological role, transcriptional activator which interacts with the mcb binding subunit complex formed by res2 and cdc10. Rep2 is required for the mitotic cell cycle start. This Schizosaccharomyces pombe (strain 972 / ATCC 24843) (Fission yeast) protein is Transcriptional activator protein rep2 (rep2).